The following is a 32-amino-acid chain: Protamine-2 (32 aa).

The interval 1 to 32 is disordered; the sequence is PRRRRSSSRPVRRRRARRVSRRRRRRGGRRRR.

In terms of tissue distribution, testis.

It is found in the nucleus. It localises to the chromosome. Functionally, protamines substitute for histones in the chromatin of sperm during the haploid phase of spermatogenesis. They compact sperm DNA into a highly condensed, stable and inactive complex. The chain is Protamine-2 from Oncorhynchus mykiss (Rainbow trout).